A 1382-amino-acid chain; its full sequence is DNA-directed RNA polymerase subunit beta (1382 aa).

It belongs to the RNA polymerase beta chain family. The RNAP catalytic core consists of 2 alpha, 1 beta, 1 beta' and 1 omega subunit. When a sigma factor is associated with the core the holoenzyme is formed, which can initiate transcription.

The catalysed reaction is RNA(n) + a ribonucleoside 5'-triphosphate = RNA(n+1) + diphosphate. Its function is as follows. DNA-dependent RNA polymerase catalyzes the transcription of DNA into RNA using the four ribonucleoside triphosphates as substrates. This is DNA-directed RNA polymerase subunit beta from Aliarcobacter butzleri (strain RM4018) (Arcobacter butzleri).